The primary structure comprises 331 residues: Vitamin B12 import system permease protein BtuC (331 aa).

Transmembrane regions (helical) follow at residues 20 to 42, 62 to 84, 91 to 113, 118 to 140, 147 to 169, 189 to 208, 240 to 262, 277 to 299, and 306 to 325; these read IMSV…FLSP, LVAA…VLLG, GVLG…LPVL, IFML…IARA, RLLL…AFYF, ASWY…VWLC, LAIS…VGLV, YLLP…GARL, and LPLG…WMLV.

It belongs to the binding-protein-dependent transport system permease family. FecCD subfamily. In terms of assembly, the complex is composed of two ATP-binding proteins (BtuD), two transmembrane proteins (BtuC) and a solute-binding protein (BtuF).

Its subcellular location is the cell inner membrane. Part of the ABC transporter complex BtuCDF involved in vitamin B12 import. Involved in the translocation of the substrate across the membrane. In Vibrio parahaemolyticus serotype O3:K6 (strain RIMD 2210633), this protein is Vitamin B12 import system permease protein BtuC.